The sequence spans 179 residues: Replication restart protein DnaT (179 aa).

The tract at residues 156 to 179 is disordered; it reads GGLPKRDVNTVSEPDSQIPPGFRG.

Belongs to the DnaT family. Homooligomerizes. Interacts with PriB. Component of the replication restart primosome. Primosome assembly occurs via a 'hand-off' mechanism. PriA binds to replication forks, subsequently PriB then DnaT bind; DnaT then displaces ssDNA to generate the helicase loading substrate.

In terms of biological role, involved in the restart of stalled replication forks, which reloads the replicative helicase on sites other than the origin of replication. Can function in multiple replication restart pathways. Displaces ssDNA from a PriB-ssDNA complex. Probably forms a spiral filament on ssDNA. This is Replication restart protein DnaT from Escherichia coli O17:K52:H18 (strain UMN026 / ExPEC).